A 280-amino-acid chain; its full sequence is Truncated lectin 2 (280 aa).

An N-terminal signal peptide occupies residues 1 to 26 (MSSSNFSCILSISLTFFILLLNKVNS). Mn(2+) is bound by residues glutamate 148 and aspartate 150. The Ca(2+) site is built by aspartate 150, phenylalanine 152, asparagine 154, and aspartate 158. Position 158 (aspartate 158) interacts with Mn(2+). Asparagine 163 is a glycosylation site (N-linked (GlcNAc...) asparagine). Histidine 170 is a Mn(2+) binding site. Asparagine 272 carries N-linked (GlcNAc...) asparagine glycosylation.

Belongs to the leguminous lectin family.

The polypeptide is Truncated lectin 2 (LEC2) (Medicago truncatula (Barrel medic)).